A 793-amino-acid polypeptide reads, in one-letter code: Phenylalanine--tRNA ligase beta subunit (793 aa).

The tRNA-binding domain occupies 39–148; it reads AGQFTHVIVA…DEAPIGMDLR (110 aa). In terms of domain architecture, B5 spans 401–477; that stretch reads PGTVSFLFDT…RLYGYDKLQA (77 aa). Mg(2+)-binding residues include D455, D461, E464, and E465. In terms of domain architecture, FDX-ACB spans 698–792; the sequence is SKYPQIRRDL…LENEFSILLR (95 aa).

Belongs to the phenylalanyl-tRNA synthetase beta subunit family. Type 1 subfamily. As to quaternary structure, tetramer of two alpha and two beta subunits. It depends on Mg(2+) as a cofactor.

It localises to the cytoplasm. The enzyme catalyses tRNA(Phe) + L-phenylalanine + ATP = L-phenylalanyl-tRNA(Phe) + AMP + diphosphate + H(+). The polypeptide is Phenylalanine--tRNA ligase beta subunit (Legionella pneumophila (strain Lens)).